A 335-amino-acid chain; its full sequence is Zinc finger protein CO3 (335 aa).

4 residues coordinate Zn(2+): Cys15, Cys18, Cys38, and His43. The segment at 15–57 (CDSCRSAPCAFYCLADSAALCATCDADVHSVNPLARRHRRVPM) adopts a B box-type; atypical zinc-finger fold. The disordered stretch occupies residues 141–179 (AGEKEDASSSKDCSSSHGKSSEGSHEFAVPGEPVPERQG). Residues 268-310 (REARVHRYREKRKTRRFEKTIRYASRKAYAETRPRIKGRFAKR) form the CCT domain.

Belongs to the CONSTANS family.

The protein localises to the nucleus. Its function is as follows. Probable transcription factor involved in the regulation of flowering time under short day (SD) conditions. Functions as a repressor of flowering under SD conditions, independently of HD1, EHD1, MADS50 and MADS51. Controls flowering time under SD conditions by negatively regulating the expression of HD3A and FTL. The polypeptide is Zinc finger protein CO3 (Oryza sativa subsp. japonica (Rice)).